Here is a 55-residue protein sequence, read N- to C-terminus: ATP synthase F(0) complex subunit 8 (55 aa).

A helical membrane pass occupies residues 4–24 (LNPSPWLLILLFSWLIFLTML). The tract at residues 36–55 (MPSTQNMCKQEPEPWTWPWA) is disordered.

Belongs to the ATPase protein 8 family. As to quaternary structure, component of the ATP synthase complex composed at least of ATP5F1A/subunit alpha, ATP5F1B/subunit beta, ATP5MC1/subunit c (homooctomer), MT-ATP6/subunit a, MT-ATP8/subunit 8, ATP5ME/subunit e, ATP5MF/subunit f, ATP5MG/subunit g, ATP5MK/subunit k, ATP5MJ/subunit j, ATP5F1C/subunit gamma, ATP5F1D/subunit delta, ATP5F1E/subunit epsilon, ATP5PF/subunit F6, ATP5PB/subunit b, ATP5PD/subunit d, ATP5PO/subunit OSCP. ATP synthase complex consists of a soluble F(1) head domain (subunits alpha(3) and beta(3)) - the catalytic core - and a membrane F(0) domain - the membrane proton channel (subunits c, a, 8, e, f, g, k and j). These two domains are linked by a central stalk (subunits gamma, delta, and epsilon) rotating inside the F1 region and a stationary peripheral stalk (subunits F6, b, d, and OSCP).

Its subcellular location is the mitochondrion membrane. Subunit 8, of the mitochondrial membrane ATP synthase complex (F(1)F(0) ATP synthase or Complex V) that produces ATP from ADP in the presence of a proton gradient across the membrane which is generated by electron transport complexes of the respiratory chain. ATP synthase complex consist of a soluble F(1) head domain - the catalytic core - and a membrane F(1) domain - the membrane proton channel. These two domains are linked by a central stalk rotating inside the F(1) region and a stationary peripheral stalk. During catalysis, ATP synthesis in the catalytic domain of F(1) is coupled via a rotary mechanism of the central stalk subunits to proton translocation. In vivo, can only synthesize ATP although its ATP hydrolase activity can be activated artificially in vitro. Part of the complex F(0) domain. This Latimeria chalumnae (Coelacanth) protein is ATP synthase F(0) complex subunit 8.